The primary structure comprises 684 residues: DNA-directed RNA polymerase subunit beta' (684 aa).

Zn(2+) contacts are provided by cysteine 69, cysteine 71, cysteine 87, and cysteine 90. Mg(2+) contacts are provided by aspartate 489, aspartate 491, and aspartate 493.

It belongs to the RNA polymerase beta' chain family. RpoC1 subfamily. In plastids the minimal PEP RNA polymerase catalytic core is composed of four subunits: alpha, beta, beta', and beta''. When a (nuclear-encoded) sigma factor is associated with the core the holoenzyme is formed, which can initiate transcription. The cofactor is Mg(2+). Zn(2+) serves as cofactor.

It is found in the plastid. The protein resides in the chloroplast. The enzyme catalyses RNA(n) + a ribonucleoside 5'-triphosphate = RNA(n+1) + diphosphate. Functionally, DNA-dependent RNA polymerase catalyzes the transcription of DNA into RNA using the four ribonucleoside triphosphates as substrates. The polypeptide is DNA-directed RNA polymerase subunit beta' (Morus indica (Mulberry)).